The chain runs to 105 residues: Large ribosomal subunit protein bL34m (105 aa).

Residues 1–16 (MPLFARLCQPQSRRMF) constitute a mitochondrion transit peptide.

Belongs to the bacterial ribosomal protein bL34 family. In terms of assembly, component of the mitochondrial large ribosomal subunit (mt-LSU). Mature yeast 74S mitochondrial ribosomes consist of a small (37S) and a large (54S) subunit. The 37S small subunit contains a 15S ribosomal RNA (15S mt-rRNA) and 34 different proteins. The 54S large subunit contains a 21S rRNA (21S mt-rRNA) and 46 different proteins.

The protein resides in the mitochondrion. Its function is as follows. Component of the mitochondrial ribosome (mitoribosome), a dedicated translation machinery responsible for the synthesis of mitochondrial genome-encoded proteins, including at least some of the essential transmembrane subunits of the mitochondrial respiratory chain. The mitoribosomes are attached to the mitochondrial inner membrane and translation products are cotranslationally integrated into the membrane. In Saccharomyces cerevisiae (strain ATCC 204508 / S288c) (Baker's yeast), this protein is Large ribosomal subunit protein bL34m.